A 206-amino-acid polypeptide reads, in one-letter code: High frequency lysogenization protein HflD homolog (206 aa).

It belongs to the HflD family.

Its subcellular location is the cytoplasm. It is found in the cell inner membrane. This is High frequency lysogenization protein HflD homolog from Pseudomonas savastanoi pv. phaseolicola (strain 1448A / Race 6) (Pseudomonas syringae pv. phaseolicola (strain 1448A / Race 6)).